A 446-amino-acid chain; its full sequence is Glutamate-1-semialdehyde 2,1-aminomutase (446 aa).

Lysine 263 carries the N6-(pyridoxal phosphate)lysine modification.

Belongs to the class-III pyridoxal-phosphate-dependent aminotransferase family. HemL subfamily. Pyridoxal 5'-phosphate is required as a cofactor.

It is found in the cytoplasm. It carries out the reaction (S)-4-amino-5-oxopentanoate = 5-aminolevulinate. It functions in the pathway porphyrin-containing compound metabolism; protoporphyrin-IX biosynthesis; 5-aminolevulinate from L-glutamyl-tRNA(Glu): step 2/2. This Haloquadratum walsbyi (strain DSM 16790 / HBSQ001) protein is Glutamate-1-semialdehyde 2,1-aminomutase.